The chain runs to 127 residues: Large ribosomal subunit protein bL17 (127 aa).

It belongs to the bacterial ribosomal protein bL17 family. Part of the 50S ribosomal subunit. Contacts protein L32.

The protein is Large ribosomal subunit protein bL17 of Photobacterium profundum (strain SS9).